A 98-amino-acid chain; its full sequence is NADH-ubiquinone oxidoreductase chain 4L (98 aa).

Helical transmembrane passes span 1–21 (MSLTYFNVMLAFTMSFLGLLM), 30–50 (LLCLEGLMLSLFVLVTITILI), and 61–81 (IILLVFAACEAALGLSLLVAV).

Belongs to the complex I subunit 4L family. In terms of assembly, core subunit of respiratory chain NADH dehydrogenase (Complex I) which is composed of 45 different subunits.

It is found in the mitochondrion inner membrane. The enzyme catalyses a ubiquinone + NADH + 5 H(+)(in) = a ubiquinol + NAD(+) + 4 H(+)(out). Its function is as follows. Core subunit of the mitochondrial membrane respiratory chain NADH dehydrogenase (Complex I) which catalyzes electron transfer from NADH through the respiratory chain, using ubiquinone as an electron acceptor. Part of the enzyme membrane arm which is embedded in the lipid bilayer and involved in proton translocation. The polypeptide is NADH-ubiquinone oxidoreductase chain 4L (MT-ND4L) (Pipistrellus abramus (Japanese pipistrelle)).